Consider the following 189-residue polypeptide: Interferon alpha-B (189 aa).

An N-terminal signal peptide occupies residues 1–23; sequence MAPAWSFLLALLLLSCNAICSLG. Disulfide bonds link Cys-24–Cys-122 and Cys-52–Cys-162.

The protein belongs to the alpha/beta interferon family.

The protein localises to the secreted. Its function is as follows. Produced by macrophages, IFN-alpha have antiviral activities. Interferon stimulates the production of two enzymes: a protein kinase and an oligoadenylate synthetase. The polypeptide is Interferon alpha-B (IFNAB) (Bos taurus (Bovine)).